The primary structure comprises 113 residues: Carboxysome shell protein CcmK4 (113 aa).

The BMC domain occupies 5–91; it reads AIGSLETKGF…PHENVEAVFP (87 aa).

This sequence belongs to the bacterial microcompartments protein family. CcmK subfamily. In terms of assembly, homohexamer. Interacts stably with CcmK3, probably forms heterohexamers with a 1:2 CcmK3:CcmK4 stoichiometry.

Its subcellular location is the carboxysome. Its function is as follows. One of the shell proteins of the carboxysome, a polyhedral inclusion where RuBisCO (ribulose bisphosphate carboxylase, rbcL-rbcS) is sequestered. Assembles into hexamers which make sheets that form the facets of the polyhedral carboxysome. The hexamer central pore probably regulates metabolite flux. Functionally, a minor shell protein of the carboxysome, a polyhedral inclusion where RuBisCO (ribulose bisphosphate carboxylase, rbcL-rbcS) is sequestered. Hexamers form sheets that form the facets of the polyhedral carboxysome. The shell is 4.5 nm thick, as observed for CcmK proteins. In PCC 7942 there are several CcmK paralogs with presumably functional differences; replacing the central pore residues (34-37) with those of CcmK2 from this organism (Tyr-Glu-Lys-Ile) allows the bacterium to make carboxysomes, but the expression level is too low to know if the carboxysome is functional for CO(2) fixation. This subunit probably makes both homohexamers and heterohexamers with CcmK3. The CcmK3-CcmK4 heterohexmers have been suggested to cap other hexamers, perhaps to alter metabolite flux. The polypeptide is Carboxysome shell protein CcmK4 (Synechococcus elongatus (strain ATCC 33912 / PCC 7942 / FACHB-805) (Anacystis nidulans R2)).